Here is a 125-residue protein sequence, read N- to C-terminus: Apoptosis inhibitor Rv3655c (125 aa).

Residues methionine 1–alanine 33 form the signal peptide.

As to quaternary structure, interacts with human E3 ubiquitin-protein ligase RNF213.

The protein resides in the secreted. It is found in the host cytoplasm. Effector protein that participates in the suppression of macrophage apoptosis by blocking the extrinsic pathway. Interferes with caspase-8 activation and binds to the host E3 ubiquitin-protein ligase RNF213, whose fusion partners have anti-apoptotic function. The sequence is that of Apoptosis inhibitor Rv3655c from Mycobacterium tuberculosis (strain ATCC 25618 / H37Rv).